A 360-amino-acid polypeptide reads, in one-letter code: MECKYFGKCGSCSLYEGGYEEQLQKKVHEFEKLFGLEPEIFPSKQSRYRARAEFRYIDGEYAMHRLHEKGLVTIDACEMVLESIYELMSKLRLLINKHEILSNRLYRVDFLSGLSGESLVTMVYHRPIDEAWEKAANEIAKALHIDIVGRSRGKKIVIGKEYITEKLPVFEKEFLFRHYEGSFTQPNPYVNIKMIEWAGRIAKDLQGDLLELYCGAGNFTLPLSRYFEKVLATEVNKSSIKAAKENVALNGIENVEFVRLSSQEVTQALRGVRDFRRLENIDLHSYNFQTVFVDPPRCGLDDDTRELVREFDNIVYISCNPQTLHRDLEELSKTHTVQKVAVFDQFPYTPHLESGVYLTR.

S-adenosyl-L-methionine is bound by residues glutamine 185, tyrosine 213, asparagine 218, glutamate 234, and aspartate 294. Residue cysteine 319 is the Nucleophile of the active site. Glutamate 353 (proton acceptor) is an active-site residue.

It belongs to the class I-like SAM-binding methyltransferase superfamily. RNA M5U methyltransferase family. TrmA subfamily.

It carries out the reaction uridine(54) in tRNA + S-adenosyl-L-methionine = 5-methyluridine(54) in tRNA + S-adenosyl-L-homocysteine + H(+). It catalyses the reaction uridine(341) in tmRNA + S-adenosyl-L-methionine = 5-methyluridine(341) in tmRNA + S-adenosyl-L-homocysteine + H(+). Functionally, dual-specificity methyltransferase that catalyzes the formation of 5-methyluridine at position 54 (m5U54) in all tRNAs, and that of position 341 (m5U341) in tmRNA (transfer-mRNA). This chain is tRNA/tmRNA (uracil-C(5))-methyltransferase, found in Nitratiruptor sp. (strain SB155-2).